The sequence spans 2145 residues: U5 small nuclear ribonucleoprotein 200 kDa helicase (2145 aa).

2 disordered regions span residues 54-82 (GDRAIKGKAPVQDQKKKRKKKDDEKAQQF) and 202-243 (DSDE…GDGH). Residues 220 to 231 (SEEESEEEEGVD) are compositionally biased toward acidic residues. Positions 484–667 (DSALRSKEHL…FLRVKPEHLH (184 aa)) constitute a Helicase ATP-binding 1 domain. Residue 497-504 (APTGAGKT) coordinates ATP. The short motif at 609–612 (DEIH) is the DEAH box element. The 218-residue stretch at 677–894 (PLEQQYIGVT…QMVSRLTDML (218 aa)) folds into the Helicase C-terminal domain. The 304-residue stretch at 975–1278 (TELGRIASHF…IGAETVLPIS (304 aa)) folds into the SEC63 1 domain. The Helicase ATP-binding 2 domain maps to 1331-1506 (RTVFESNENV…WLGCSASATF (176 aa)). 1344–1351 (APNGSGKT) is an ATP binding site. The short motif at 1448-1451 (DDLH) is the DEAH box element. The region spanning 1812–2124 (LNLGMIASYY…YLGADQEFDV (313 aa)) is the SEC63 2 domain.

Belongs to the helicase family. SKI2 subfamily.

The protein resides in the nucleus. It carries out the reaction ATP + H2O = ADP + phosphate + H(+). Functionally, catalyzes the ATP-dependent unwinding of U4/U6 RNA duplices, an essential step in the assembly of a catalytically active spliceosome. Plays a role in pre-mRNA splicing. This is U5 small nuclear ribonucleoprotein 200 kDa helicase from Caenorhabditis elegans.